The following is a 420-amino-acid chain: uncharacterized protein (420 aa).

The N-terminal stretch at 1–25 is a signal peptide; sequence MRYAMNKIPALLLVGALIIATVASG. Cys26 is modified (N-acetylcysteine). The S-archaeol cysteine moiety is linked to residue Cys26.

This sequence belongs to the bacterial solute-binding protein 1 family.

The protein resides in the cell membrane. Its function is as follows. Probably part of a binding-protein-dependent transport system PH1036/38/39. This is an uncharacterized protein from Pyrococcus horikoshii (strain ATCC 700860 / DSM 12428 / JCM 9974 / NBRC 100139 / OT-3).